We begin with the raw amino-acid sequence, 212 residues long: Adenylate kinase (212 aa).

10-15 is an ATP binding site; sequence GAGKGT. Positions 30 to 59 are NMP; it reads AIGDIFRTIIKTSTSEAELINNYVKQGELI. AMP-binding positions include arginine 36, 57–59, 85–88, and glutamine 92; these read ELI and GYPR. Positions 122–160 are LID; that stretch reads GRYSCKNCGKIYNRYFLQPKTDNVCDVCGSSTFDYRKDD. Arginine 123 contributes to the ATP binding site. Cysteine 126 and cysteine 129 together coordinate Zn(2+). ATP is bound at residue 132 to 133; it reads IY. Residues cysteine 146 and cysteine 149 each contribute to the Zn(2+) site. Residues arginine 157 and arginine 168 each coordinate AMP. Lysine 196 provides a ligand contact to ATP.

This sequence belongs to the adenylate kinase family. As to quaternary structure, monomer.

The protein resides in the cytoplasm. The enzyme catalyses AMP + ATP = 2 ADP. The protein operates within purine metabolism; AMP biosynthesis via salvage pathway; AMP from ADP: step 1/1. Functionally, catalyzes the reversible transfer of the terminal phosphate group between ATP and AMP. Plays an important role in cellular energy homeostasis and in adenine nucleotide metabolism. This chain is Adenylate kinase, found in Rickettsia africae (strain ESF-5).